Reading from the N-terminus, the 432-residue chain is uncharacterized protein (432 aa).

The segment covering 1–14 has biased composition (polar residues); it reads MSDTTDVPENQKSP. The interval 1–42 is disordered; sequence MSDTTDVPENQKSPKPSGKADKRKIEEKPENSSLKRKKFEDP. Residues 18–30 show a composition bias toward basic and acidic residues; it reads GKADKRKIEEKPE. An S4 RNA-binding domain is found at 85-148; the sequence is RKMVEVFSGE…HEHPIRDLPI (64 aa). Residue D199 is part of the active site.

Belongs to the pseudouridine synthase RluA family.

This is an uncharacterized protein from Caenorhabditis elegans.